Here is a 915-residue protein sequence, read N- to C-terminus: Protein SLFN14 (915 aa).

The span at 157-167 (AAQRGRRRLHP) shows a compositional bias: basic residues. The disordered stretch occupies residues 157-176 (AAQRGRRRLHPPRASNSNLQ). The required for endoribonuclease activity stretch occupies residues 204-389 (ESTHVEFKRF…KVLEFKGALQ (186 aa)). The tract at residues 390 to 569 (RHLFPVTQKT…QLGCEFFNLL (180 aa)) is required for ribosome binding.

In terms of assembly, associates with ribosomes in an ATP-independent manner. Requires Mg(2+) as cofactor. Mn(2+) is required as a cofactor. In terms of tissue distribution, detected in reticulocytes (at protein level).

Its subcellular location is the nucleus. Functionally, shows no ribosome-associated and endoribonuclease activities. Displays polysome-associated endoribonuclease activity towards mRNAs and rRNAs. May play a role in RNA surveillance pathways by recognizing stalled ribosomes and triggering endonucleolytic cleavage of aberrant mRNAs. Cleaves RNAs in a magnesium-, manganese-dependent and ATP-independent manner. Involved in correct maturation of megakaryocytes and especially important for proplatelet extension. In Oryctolagus cuniculus (Rabbit), this protein is Protein SLFN14.